Consider the following 546-residue polypeptide: Chaperonin GroEL (546 aa).

Residues Thr30–Pro33, Lys51, Asp87–Thr91, Gly415, Asn479–Ala481, and Asp495 contribute to the ATP site.

Belongs to the chaperonin (HSP60) family. In terms of assembly, forms a cylinder of 14 subunits composed of two heptameric rings stacked back-to-back. Interacts with the co-chaperonin GroES.

The protein localises to the cytoplasm. It carries out the reaction ATP + H2O + a folded polypeptide = ADP + phosphate + an unfolded polypeptide.. Together with its co-chaperonin GroES, plays an essential role in assisting protein folding. The GroEL-GroES system forms a nano-cage that allows encapsulation of the non-native substrate proteins and provides a physical environment optimized to promote and accelerate protein folding. The chain is Chaperonin GroEL from Stutzerimonas stutzeri (strain A1501) (Pseudomonas stutzeri).